A 151-amino-acid polypeptide reads, in one-letter code: uncharacterized protein (151 aa).

Positions 1–77 (MSLLGGMWKS…LGSNPISSSR (77 aa)) are disordered. 2 stretches are compositionally biased toward low complexity: residues 19–54 (PKPS…RSSN) and 63–76 (SISG…ISSS).

This is an uncharacterized protein from Methanothermobacter marburgensis (strain ATCC BAA-927 / DSM 2133 / JCM 14651 / NBRC 100331 / OCM 82 / Marburg) (Methanobacterium thermoautotrophicum).